We begin with the raw amino-acid sequence, 328 residues long: Olfactory receptor 4A16 (328 aa).

Over 1–23 (MRPSSNVTEFVLLGLTQDPDVKK) the chain is Extracellular. Asparagine 6 is a glycosylation site (N-linked (GlcNAc...) asparagine). Residues 24 to 47 (TLFVMFLLIYIVTMVGNLLIWVTT) traverse the membrane as a helical segment. Topologically, residues 48-55 (IGSPSLGS) are cytoplasmic. The chain crosses the membrane as a helical span at residues 56-77 (LMYFFLAYLSLMDAIYSTAMSP). The Extracellular portion of the chain corresponds to 78 to 98 (KLMIDLLCDKIAISLSACMGQ). Cysteine 95 and cysteine 187 are disulfide-bonded. Residues 99-118 (LFIEHLLGGAEVFLLVVMAY) form a helical membrane-spanning segment. The Cytoplasmic segment spans residues 119-137 (DRYVAISKPLHYLNIMNRL). The helical transmembrane segment at 138 to 156 (VCILLLVVAMIGGFVHSVV) threads the bilayer. The Extracellular segment spans residues 157 to 193 (QIVFLYSLPICGPNVIDHSVCDMYPLLELLCLDTYFI). Residues 194–217 (GLTVVANGGIICMVIFTFLLISCG) form a helical membrane-spanning segment. The Cytoplasmic portion of the chain corresponds to 218–233 (VILNFLKTYSQEERHK). The chain crosses the membrane as a helical span at residues 234-256 (ALPTCISHIIVVALVFVPCIFMY). Residues 257–267 (VRPVSNFPFDK) lie on the Extracellular side of the membrane. Residues 268–287 (LMTVFYSIITLMLNPLIYSL) form a helical membrane-spanning segment. Over 288–328 (RQSEMKNAMKNLWCEKLSIVRKRVSPTLNIFIPSSKATNRR) the chain is Cytoplasmic.

Belongs to the G-protein coupled receptor 1 family.

It localises to the cell membrane. Its function is as follows. Odorant receptor. The polypeptide is Olfactory receptor 4A16 (OR4A16) (Homo sapiens (Human)).